Reading from the N-terminus, the 253-residue chain is uncharacterized protein (253 aa).

Residues Ile-17, Ser-36, Asp-62, Asn-89, Tyr-158, Lys-162, Val-191, and Thr-193 each contribute to the NADP(+) site. Tyr-158 (proton donor) is an active-site residue. Lys-162 serves as the catalytic Lowers pKa of active site Tyr.

The protein belongs to the short-chain dehydrogenases/reductases (SDR) family.

The protein localises to the cytoplasm. Its subcellular location is the nucleus. This is an uncharacterized protein from Schizosaccharomyces pombe (strain 972 / ATCC 24843) (Fission yeast).